Consider the following 474-residue polypeptide: Trehalose-6-phosphate synthase (474 aa).

Arginine 10 is a binding site for D-glucose 6-phosphate. 22 to 23 is a binding site for UDP-alpha-D-glucose; the sequence is GG. Tyrosine 77 and aspartate 131 together coordinate D-glucose 6-phosphate. The UDP-alpha-D-glucose site is built by arginine 263 and lysine 268. D-glucose 6-phosphate is bound at residue arginine 301. UDP-alpha-D-glucose-binding positions include phenylalanine 340 and 366-370; that span reads LVAKE.

The protein belongs to the glycosyltransferase 20 family. As to quaternary structure, homotetramer.

It carries out the reaction D-glucose 6-phosphate + UDP-alpha-D-glucose = alpha,alpha-trehalose 6-phosphate + UDP + H(+). Its pathway is glycan biosynthesis; trehalose biosynthesis. Probably involved in the osmoprotection via the biosynthesis of trehalose. Catalyzes the transfer of glucose from UDP-alpha-D-glucose (UDP-Glc) to D-glucose 6-phosphate (Glc-6-P) to form trehalose-6-phosphate. Acts with retention of the anomeric configuration of the UDP-sugar donor. The protein is Trehalose-6-phosphate synthase of Escherichia coli O157:H7.